The following is a 530-amino-acid chain: Probable basic-leucine zipper transcription factor L (530 aa).

Composition is skewed to low complexity over residues 1–17 and 24–39; these read MYSPSSPQSSEPMSPES and SINNSNSSNNSSANQS. The disordered stretch occupies residues 1–76; the sequence is MYSPSSPQSS…QSAALSRSRK (76 aa). A bZIP domain is found at 55 to 118; sequence VKKRQVRLLK…FETKSRLEFL (64 aa). The tract at residues 56–77 is basic motif; sequence KKRQVRLLKNRQSAALSRSRKK. The leucine-zipper stretch occupies residues 83–104; sequence LESKAQELTHSTQELHVQYNKI. Disordered regions lie at residues 142–177, 216–258, and 389–481; these read NNIKSHSRSNSSSSSLSSSPTTPNTTTTTTTSTTPV, SQNK…SPTP, and HHHH…SQIN. Low complexity-rich tracts occupy residues 149 to 176 and 220 to 247; these read RSNSSSSSLSSSPTTPNTTTTTTTSTTP and NNNNNNNNNNNNNNNNNNNNNNNNNTTN. Residues 248 to 257 are compositionally biased toward polar residues; the sequence is LLDQQQQSPT. Residues 436–478 are compositionally biased toward low complexity; that stretch reads SSSPSSSSTSSPSTSSPSTPKSMGFPSPIFIGSSGSGPSSSGS.

This sequence belongs to the bZIP family.

It is found in the nucleus. Functionally, probable transcriptional regulator. This Dictyostelium discoideum (Social amoeba) protein is Probable basic-leucine zipper transcription factor L (bzpL).